We begin with the raw amino-acid sequence, 631 residues long: 1-deoxy-D-xylulose-5-phosphate synthase (631 aa).

Thiamine diphosphate is bound by residues histidine 87 and 128-130 (GHS). Residue aspartate 159 participates in Mg(2+) binding. Thiamine diphosphate contacts are provided by residues 160–161 (GA), asparagine 188, phenylalanine 295, and glutamate 378. Asparagine 188 lines the Mg(2+) pocket.

This sequence belongs to the transketolase family. DXPS subfamily. As to quaternary structure, homodimer. Mg(2+) serves as cofactor. Thiamine diphosphate is required as a cofactor.

It catalyses the reaction D-glyceraldehyde 3-phosphate + pyruvate + H(+) = 1-deoxy-D-xylulose 5-phosphate + CO2. It participates in metabolic intermediate biosynthesis; 1-deoxy-D-xylulose 5-phosphate biosynthesis; 1-deoxy-D-xylulose 5-phosphate from D-glyceraldehyde 3-phosphate and pyruvate: step 1/1. Catalyzes the acyloin condensation reaction between C atoms 2 and 3 of pyruvate and glyceraldehyde 3-phosphate to yield 1-deoxy-D-xylulose-5-phosphate (DXP). This Pseudomonas syringae pv. tomato (strain ATCC BAA-871 / DC3000) protein is 1-deoxy-D-xylulose-5-phosphate synthase.